The sequence spans 638 residues: 1,4-alpha-glucan branching enzyme GlgB (638 aa).

Aspartate 303 acts as the Nucleophile in catalysis. Residue glutamate 356 is the Proton donor of the active site.

This sequence belongs to the glycosyl hydrolase 13 family. GlgB subfamily. Monomer.

The enzyme catalyses Transfers a segment of a (1-&gt;4)-alpha-D-glucan chain to a primary hydroxy group in a similar glucan chain.. It functions in the pathway glycan biosynthesis; glycogen biosynthesis. Functionally, catalyzes the formation of the alpha-1,6-glucosidic linkages in glycogen by scission of a 1,4-alpha-linked oligosaccharide from growing alpha-1,4-glucan chains and the subsequent attachment of the oligosaccharide to the alpha-1,6 position. The chain is 1,4-alpha-glucan branching enzyme GlgB from Lactobacillus acidophilus (strain ATCC 700396 / NCK56 / N2 / NCFM).